We begin with the raw amino-acid sequence, 137 residues long: MLQPSNRKYRKDFKGRNRGVASRGNRVSFGEFGLKATECARITARQLEAARRTIARHIKRGGKITIRIFPDKPITKKPLEVRQGKGKGSVEYWVALVQPGRMIFEIEGVDEALAREAFSRAAAKLPLKCLFVKRTVM.

The segment at 1–20 is disordered; it reads MLQPSNRKYRKDFKGRNRGV. The span at 7–17 shows a compositional bias: basic residues; sequence RKYRKDFKGRN.

It belongs to the universal ribosomal protein uL16 family. Part of the 50S ribosomal subunit.

In terms of biological role, binds 23S rRNA and is also seen to make contacts with the A and possibly P site tRNAs. This is Large ribosomal subunit protein uL16 from Coxiella burnetii (strain CbuG_Q212) (Coxiella burnetii (strain Q212)).